Here is a 307-residue protein sequence, read N- to C-terminus: Porphobilinogen deaminase (307 aa).

S-(dipyrrolylmethanemethyl)cysteine is present on Cys239.

The protein belongs to the HMBS family. Monomer. It depends on dipyrromethane as a cofactor.

The enzyme catalyses 4 porphobilinogen + H2O = hydroxymethylbilane + 4 NH4(+). It functions in the pathway porphyrin-containing compound metabolism; protoporphyrin-IX biosynthesis; coproporphyrinogen-III from 5-aminolevulinate: step 2/4. Its function is as follows. Tetrapolymerization of the monopyrrole PBG into the hydroxymethylbilane pre-uroporphyrinogen in several discrete steps. The chain is Porphobilinogen deaminase from Campylobacter jejuni subsp. doylei (strain ATCC BAA-1458 / RM4099 / 269.97).